We begin with the raw amino-acid sequence, 685 residues long: Protein hook (685 aa).

A Calponin-homology (CH) domain is found at 6–122 (MEIYESLIRW…RLLQLILGCA (117 aa)). Residues 134–570 (QIMELEESLQ…LLAADSRYKK (437 aa)) are a coiled coil. Disordered stretches follow at residues 430–449 (AAEDSESGNTMSKELHSSDV), 593–625 (LEKPSQDGEASSSSATGSGGDASTLTSTGSGRV), and 661–685 (PGQSFLSRQRQPAPRKPMNMPFAKK). Over residues 602-623 (ASSSSATGSGGDASTLTSTGSG) the composition is skewed to low complexity. Residues 661–670 (PGQSFLSRQR) show a composition bias toward polar residues.

The protein belongs to the hook family. As to quaternary structure, homodimer. Interacts with microtubules via its N-terminus.

It localises to the cytoplasm. Its subcellular location is the cytoskeleton. The protein localises to the endosome. Functionally, involved in endocytic trafficking. Probably acts as a cytoskeletal linker protein that tethers endosome vesicles to the cytoskeleton. This chain is Protein hook, found in Aedes aegypti (Yellowfever mosquito).